A 381-amino-acid chain; its full sequence is Probable cyclic AMP-AMP-GMP nucleotide synthase (381 aa).

GTP-binding residues include serine 53 and arginine 56. Residues aspartate 69 and aspartate 71 contribute to the active site. 2 residues coordinate Mg(2+): aspartate 69 and aspartate 71. Arginine 109 contributes to the GTP binding site. Aspartate 121 is an active-site residue. Mg(2+) is bound by residues aspartate 121 and aspartate 196. Positions 197, 204, 205, 210, and 307 each coordinate GTP. The segment at 348–381 (GTKFPFPGPQGGDRSGGFTAPTQPAEPQKTGRFA) is disordered.

It belongs to the CD-NTase family. D02 subfamily. Requires Mg(2+) as cofactor.

The catalysed reaction is GTP + 2 ATP = 3',3',3'-cAAG + 3 diphosphate. Its function is as follows. Cyclic nucleotide synthase (second messenger synthase) of a CBASS antivirus system. CBASS (cyclic oligonucleotide-based antiphage signaling system) provides immunity against bacteriophage. The CD-NTase protein synthesizes cyclic nucleotides in response to infection; these serve as specific second messenger signals. The signals activate a diverse range of effectors, leading to bacterial cell death and thus abortive phage infection. Functionally, cyclic nucleotide synthase, synthesizes a tricyclic nucleotide with AMP and GMP moieties, probably 3',3',3'-cyclic AMP-AMP-GMP (3'3'3'-cAAG). Controls the activity of the associated CBASS effector protein. This is Probable cyclic AMP-AMP-GMP nucleotide synthase from Salmonella paratyphi B (Salmonella enterica subsp. enterica serovar Paratyphi B).